The primary structure comprises 809 residues: Eukaryotic translation initiation factor 3 subunit C (809 aa).

The interval 1–102 (MSRFFAASYE…DSDESDEASK (102 aa)) is disordered. Composition is skewed to acidic residues over residues 18–30 (SEED…EEEL) and 37–59 (SEEE…DSDD). Residues 605–780 (FHEHINLDLI…SVLSIAKGAE (176 aa)) enclose the PCI domain.

Belongs to the eIF-3 subunit C family. Component of the eukaryotic translation initiation factor 3 (eIF-3) complex.

Its subcellular location is the cytoplasm. Its function is as follows. Component of the eukaryotic translation initiation factor 3 (eIF-3) complex, which is involved in protein synthesis of a specialized repertoire of mRNAs and, together with other initiation factors, stimulates binding of mRNA and methionyl-tRNAi to the 40S ribosome. The eIF-3 complex specifically targets and initiates translation of a subset of mRNAs involved in cell proliferation. This Vanderwaltozyma polyspora (strain ATCC 22028 / DSM 70294 / BCRC 21397 / CBS 2163 / NBRC 10782 / NRRL Y-8283 / UCD 57-17) (Kluyveromyces polysporus) protein is Eukaryotic translation initiation factor 3 subunit C.